Here is a 420-residue protein sequence, read N- to C-terminus: ATP phosphoribosyltransferase regulatory subunit (420 aa).

The protein belongs to the class-II aminoacyl-tRNA synthetase family. HisZ subfamily. As to quaternary structure, heteromultimer composed of HisG and HisZ subunits.

It localises to the cytoplasm. It functions in the pathway amino-acid biosynthesis; L-histidine biosynthesis; L-histidine from 5-phospho-alpha-D-ribose 1-diphosphate: step 1/9. In terms of biological role, required for the first step of histidine biosynthesis. May allow the feedback regulation of ATP phosphoribosyltransferase activity by histidine. The protein is ATP phosphoribosyltransferase regulatory subunit of Bacillus thuringiensis (strain Al Hakam).